The sequence spans 490 residues: Cobyric acid synthase (490 aa).

The GATase cobBQ-type domain occupies 252–439 (RLKVVVPVLP…LHGLFESTAA (188 aa)). Cys-333 functions as the Nucleophile in the catalytic mechanism. The active site involves His-431.

It belongs to the CobB/CobQ family. CobQ subfamily.

The protein operates within cofactor biosynthesis; adenosylcobalamin biosynthesis. In terms of biological role, catalyzes amidations at positions B, D, E, and G on adenosylcobyrinic A,C-diamide. NH(2) groups are provided by glutamine, and one molecule of ATP is hydrogenolyzed for each amidation. In Pseudomonas aeruginosa (strain UCBPP-PA14), this protein is Cobyric acid synthase.